A 296-amino-acid polypeptide reads, in one-letter code: Glycine--tRNA ligase alpha subunit (296 aa).

The protein belongs to the class-II aminoacyl-tRNA synthetase family. In terms of assembly, tetramer of two alpha and two beta subunits.

It is found in the cytoplasm. It carries out the reaction tRNA(Gly) + glycine + ATP = glycyl-tRNA(Gly) + AMP + diphosphate. The sequence is that of Glycine--tRNA ligase alpha subunit from Francisella tularensis subsp. novicida (strain U112).